The following is a 97-amino-acid chain: Large ribosomal subunit protein bL28 (97 aa).

It belongs to the bacterial ribosomal protein bL28 family.

This chain is Large ribosomal subunit protein bL28, found in Rickettsia bellii (strain OSU 85-389).